We begin with the raw amino-acid sequence, 813 residues long: Xaa-Pro dipeptidyl-peptidase (813 aa).

Active-site charge relay system residues include Ser-375, Asp-495, and His-526.

It belongs to the peptidase S15 family. As to quaternary structure, homodimer.

Its subcellular location is the cytoplasm. The enzyme catalyses Hydrolyzes Xaa-Pro-|- bonds to release unblocked, N-terminal dipeptides from substrates including Ala-Pro-|-p-nitroanilide and (sequentially) Tyr-Pro-|-Phe-Pro-|-Gly-Pro-|-Ile.. In terms of biological role, removes N-terminal dipeptides sequentially from polypeptides having unsubstituted N-termini provided that the penultimate residue is proline. This Lactiplantibacillus plantarum (strain ATCC BAA-793 / NCIMB 8826 / WCFS1) (Lactobacillus plantarum) protein is Xaa-Pro dipeptidyl-peptidase.